The sequence spans 400 residues: Tryptophan synthase beta chain (400 aa).

Residue K92 is modified to N6-(pyridoxal phosphate)lysine.

It belongs to the TrpB family. As to quaternary structure, tetramer of two alpha and two beta chains. The cofactor is pyridoxal 5'-phosphate.

It catalyses the reaction (1S,2R)-1-C-(indol-3-yl)glycerol 3-phosphate + L-serine = D-glyceraldehyde 3-phosphate + L-tryptophan + H2O. The protein operates within amino-acid biosynthesis; L-tryptophan biosynthesis; L-tryptophan from chorismate: step 5/5. Functionally, the beta subunit is responsible for the synthesis of L-tryptophan from indole and L-serine. In Neisseria gonorrhoeae (strain NCCP11945), this protein is Tryptophan synthase beta chain.